We begin with the raw amino-acid sequence, 220 residues long: Glutamine amidotransferase-like class 1 domain-containing protein 1 (220 aa).

An N-terminal signal peptide occupies residues 1–38 (MASERLPNRPACLLVASGAAEGVSAQSFLHCFTMASTA). A glycan (N-linked (GlcNAc...) asparagine) is linked at N201.

It belongs to the peptidase C56 family. Homotetramer. Component of the FERRY complex composed of five subunits, TBCK, PPP1R21, FERRY3, CRYZL1 and GATD1 with a ratio of 1:2:1:2:4, respectively.

The protein localises to the secreted. It is found in the early endosome. Functionally, component of the FERRY complex (Five-subunit Endosomal Rab5 and RNA/ribosome intermediary). The FERRY complex directly interacts with mRNAs and RAB5A, and functions as a RAB5A effector involved in the localization and the distribution of specific mRNAs most likely by mediating their endosomal transport. The complex recruits mRNAs and ribosomes to early endosomes through direct mRNA-interaction. In Homo sapiens (Human), this protein is Glutamine amidotransferase-like class 1 domain-containing protein 1.